The sequence spans 1203 residues: Chromosome partition protein Smc (1203 aa).

32-39 is a binding site for ATP; that stretch reads PNGSGKSN. Coiled coils occupy residues 167–203, 250–288, and 327–497; these read ILKY…RQLK, MMRR…SVQQ, and DVLE…LERK. The region spanning 511–622 is the SMC hinge domain; it reads GLLGSIAKLV…VVNYLAEALG (112 aa). 3 coiled-coil regions span residues 657–689, 720–765, and 976–1030; these read EVTS…ALSE, RLGQ…NVEQ, and YDRA…RKDL.

It belongs to the SMC family. As to quaternary structure, homodimer.

It localises to the cytoplasm. Functionally, required for chromosome condensation and partitioning. The chain is Chromosome partition protein Smc from Mycobacterium leprae (strain TN).